The chain runs to 127 residues: MARVTAEDCNKIIPDRFRLVVLATRYAKLLNYKVETSYSKKEKRDKPPVIALRRIAAGKVSVAQLEQDLINSLCTRNIIEPLANQDDLEDVEEKFDYLPEVYVGEDYSDLDDQIFIDENGEYDERDK.

The protein belongs to the RNA polymerase subunit omega family. The RNAP catalytic core consists of 2 alpha, 1 beta, 1 beta' and 1 omega subunit. When a sigma factor is associated with the core the holoenzyme is formed, which can initiate transcription.

The enzyme catalyses RNA(n) + a ribonucleoside 5'-triphosphate = RNA(n+1) + diphosphate. In terms of biological role, promotes RNA polymerase assembly. Latches the N- and C-terminal regions of the beta' subunit thereby facilitating its interaction with the beta and alpha subunits. The polypeptide is DNA-directed RNA polymerase subunit omega (Rickettsia canadensis (strain McKiel)).